The chain runs to 118 residues: Small ribosomal subunit protein uS13 (118 aa).

The disordered stretch occupies residues 94 to 118 (GLPVRGQRTKTNARTRKGPRKPIKK).

Belongs to the universal ribosomal protein uS13 family. As to quaternary structure, part of the 30S ribosomal subunit. Forms a loose heterodimer with protein S19. Forms two bridges to the 50S subunit in the 70S ribosome.

Located at the top of the head of the 30S subunit, it contacts several helices of the 16S rRNA. In the 70S ribosome it contacts the 23S rRNA (bridge B1a) and protein L5 of the 50S subunit (bridge B1b), connecting the 2 subunits; these bridges are implicated in subunit movement. Contacts the tRNAs in the A and P-sites. The protein is Small ribosomal subunit protein uS13 of Histophilus somni (strain 129Pt) (Haemophilus somnus).